The primary structure comprises 101 residues: Citrate lyase acyl carrier protein (101 aa).

Ser14 carries the O-(phosphoribosyl dephospho-coenzyme A)serine modification.

The protein belongs to the CitD family. In terms of assembly, oligomer with a subunit composition of (alpha,beta,gamma)6.

The protein localises to the cytoplasm. In terms of biological role, covalent carrier of the coenzyme of citrate lyase. In Latilactobacillus sakei subsp. sakei (strain 23K) (Lactobacillus sakei subsp. sakei), this protein is Citrate lyase acyl carrier protein.